A 919-amino-acid chain; its full sequence is Rho guanine nucleotide exchange factor 1 (919 aa).

Residues 39–230 (DQNSQFQSLE…SLYMRHLGVR (192 aa)) form the RGSL domain. Positions 247–402 (VMGNRRSDEP…PPGWRELVPS (156 aa)) are disordered. The span at 281–310 (DCRHLKVEVDEKPGPADRKGSLGISSRDRT) shows a compositional bias: basic and acidic residues. Residues 363 to 379 (STEDNGETESPEPGDDG) are compositionally biased toward acidic residues. A Phosphoserine modification is found at S372. Residues 414 to 603 (KRQEVISELL…REILHHVNQA (190 aa)) form the DH domain. Positions 645–758 (KLVHEGPLTW…WCALITETAG (114 aa)) constitute a PH domain. Position 693 is a phosphothreonine (T693). Position 736 is a phosphotyrosine; by JAK2 (Y736). 2 disordered regions span residues 761–800 (KVPA…PADA) and 839–865 (TEED…PTHT). Residues 775-787 (PSSTREPLLSSSE) show a composition bias toward low complexity. The stretch at 864–893 (HTQEVEENLLSLEVVIKQLEELEEEFCRLR) forms a coiled coil. Position 904 is a phosphoserine (S904).

As to quaternary structure, interacts with RHOA, GNA12 and GNA13. Homooligomerizes through the coiled coil region. Interacts with CTNNAL1. May interact with CCPG1. Phosphorylated by PKCA. Angiotensin-2 induced Tyr-736 phosphorylation is mediated by JAK2.

The protein localises to the cytoplasm. The protein resides in the membrane. Its function is as follows. Seems to play a role in the regulation of RhoA GTPase by guanine nucleotide-binding alpha-12 (GNA12) and alpha-13 (GNA13) subunits. Acts as a GTPase-activating protein (GAP) for GNA12 and GNA13, and as guanine nucleotide exchange factor (GEF) for RhoA GTPase. Activated G alpha 13/GNA13 stimulates the RhoGEF activity through interaction with the RGS-like domain. This GEF activity is inhibited by binding to activated GNA12. Mediates angiotensin-2-induced RhoA activation. In lymphoid follicles, may trigger activation of GNA13 as part of S1PR2-dependent signaling pathway that leads to inhibition of germinal center (GC) B cell growth and migration outside the GC niche. This Rattus norvegicus (Rat) protein is Rho guanine nucleotide exchange factor 1 (Arhgef1).